Reading from the N-terminus, the 344-residue chain is GTP 3',8-cyclase (344 aa).

Residues 19 to 245 (PFGRAVTYLR…DIPYRTGGPA (227 aa)) form the Radical SAM core domain. Arg-28 is a GTP binding site. Positions 35 and 39 each coordinate [4Fe-4S] cluster. An S-adenosyl-L-methionine-binding site is contributed by Tyr-41. Cys-42 serves as a coordination point for [4Fe-4S] cluster. Arg-77 provides a ligand contact to GTP. Gly-81 is an S-adenosyl-L-methionine binding site. A GTP-binding site is contributed by Thr-111. Position 135 (Ser-135) interacts with S-adenosyl-L-methionine. GTP is bound at residue Lys-171. Residue Met-205 coordinates S-adenosyl-L-methionine. [4Fe-4S] cluster-binding residues include Cys-268 and Cys-271. Position 273–275 (273–275 (RVR)) interacts with GTP. Cys-285 lines the [4Fe-4S] cluster pocket.

Belongs to the radical SAM superfamily. MoaA family. Monomer and homodimer. It depends on [4Fe-4S] cluster as a cofactor.

It catalyses the reaction GTP + AH2 + S-adenosyl-L-methionine = (8S)-3',8-cyclo-7,8-dihydroguanosine 5'-triphosphate + 5'-deoxyadenosine + L-methionine + A + H(+). Its pathway is cofactor biosynthesis; molybdopterin biosynthesis. In terms of biological role, catalyzes the cyclization of GTP to (8S)-3',8-cyclo-7,8-dihydroguanosine 5'-triphosphate. The sequence is that of GTP 3',8-cyclase from Brucella melitensis biotype 2 (strain ATCC 23457).